A 60-amino-acid chain; its full sequence is Cytotoxin 8 (60 aa).

4 disulfides stabilise this stretch: cysteine 3-cysteine 21, cysteine 14-cysteine 38, cysteine 42-cysteine 53, and cysteine 54-cysteine 59.

It belongs to the three-finger toxin family. Short-chain subfamily. Type IA cytotoxin sub-subfamily. As to quaternary structure, monomer in solution; Homodimer and oligomer in the presence of negatively charged lipids forming a pore with a size ranging between 20 and 30 Angstroms. In terms of tissue distribution, expressed by the venom gland.

The protein localises to the secreted. It localises to the target cell membrane. Functionally, shows cytolytic activity on many different cells by forming pore in lipid membranes. In vivo, increases heart rate or kills the animal by cardiac arrest. In addition, it binds to heparin with high affinity, interacts with Kv channel-interacting protein 1 (KCNIP1) in a calcium-independent manner, and binds to integrin alpha-V/beta-3 (ITGAV/ITGB3) with moderate affinity. Has hemolytic activity towards human erythrocytes (EC(50)=0.074 uM) and cytolytic activity towards various cell lines. The sequence is that of Cytotoxin 8 from Naja naja (Indian cobra).